A 969-amino-acid chain; its full sequence is Bifunctional glutamine synthetase adenylyltransferase/adenylyl-removing enzyme (969 aa).

Residues 1–456 (MNWQANIHKL…HFEQLFAAPH (456 aa)) form an adenylyl removase region. An adenylyl transferase region spans residues 466–969 (EKRLAEVWLG…SALLEDESAK (504 aa)).

The protein belongs to the GlnE family. The cofactor is Mg(2+).

It carries out the reaction [glutamine synthetase]-O(4)-(5'-adenylyl)-L-tyrosine + phosphate = [glutamine synthetase]-L-tyrosine + ADP. It catalyses the reaction [glutamine synthetase]-L-tyrosine + ATP = [glutamine synthetase]-O(4)-(5'-adenylyl)-L-tyrosine + diphosphate. In terms of biological role, involved in the regulation of glutamine synthetase GlnA, a key enzyme in the process to assimilate ammonia. When cellular nitrogen levels are high, the C-terminal adenylyl transferase (AT) inactivates GlnA by covalent transfer of an adenylyl group from ATP to specific tyrosine residue of GlnA, thus reducing its activity. Conversely, when nitrogen levels are low, the N-terminal adenylyl removase (AR) activates GlnA by removing the adenylyl group by phosphorolysis, increasing its activity. The regulatory region of GlnE binds the signal transduction protein PII (GlnB) which indicates the nitrogen status of the cell. This chain is Bifunctional glutamine synthetase adenylyltransferase/adenylyl-removing enzyme, found in Nitrosococcus oceani (strain ATCC 19707 / BCRC 17464 / JCM 30415 / NCIMB 11848 / C-107).